A 3056-amino-acid polypeptide reads, in one-letter code: Genome polyprotein (3056 aa).

In terms of domain architecture, Peptidase S30 spans 139-284 (LKGQHTIHYV…GRDMSTIREF (146 aa)). Residues histidine 192, aspartate 201, and serine 232 each act as for P1 proteinase activity in the active site. The Involved in interaction with stylet and aphid transmission motif lies at 335–338 (RITC). An Involved in virions binding and aphid transmission motif is present at residues 593-595 (PTK). A Peptidase C6 domain is found at 619–741 (MYIAKDGFCH…ESELKYYRVG (123 aa)). Residues cysteine 627 and histidine 700 each act as for helper component proteinase activity in the active site. A Helicase ATP-binding domain is found at 1214–1366 (EIAHNDAHDI…TQYPVTLVTE (153 aa)). ATP is bound at residue 1227–1234 (GAVGSGKS). The short motif at 1316–1319 (DECH) is the DECH box element. In terms of domain architecture, Helicase C-terminal spans 1385-1544 (DMLDVCDNIL…GLPVMAEGVT (160 aa)). The short motif at 1871 to 1878 (KKGKVRGT) is the Nuclear localization signal element. Tyrosine 1893 carries the O-(5'-phospho-RNA)-tyrosine modification. The Peptidase C4 domain maps to 2022–2240 (SLSKIGGLRD…IGWDGIKIVD (219 aa)). Residues histidine 2067, aspartate 2102, and cysteine 2172 each act as for nuclear inclusion protein A activity in the active site. The RdRp catalytic domain maps to 2507–2630 (WVYCDADGSQ…AIKPECESYL (124 aa)). The disordered stretch occupies residues 2788–2820 (QLNAGEEKKDKRKKNEGDPNKDSEGQSVRQIVP). A compositionally biased stretch (basic and acidic residues) spans 2792-2811 (GEEKKDKRKKNEGDPNKDSE). Phosphothreonine is present on threonine 3040.

The protein belongs to the potyviridae genome polyprotein family. Interacts with host eIF4E protein (via cap-binding region); this interaction mediates the translation of the VPg-viral RNA conjugates. Part of a complex that comprises VPg, RNA, host EIF4E and EIF4G; this interaction mediates the translation of the VPg-viral RNA conjugates. VPg is uridylylated by the polymerase and is covalently attached to the 5'-end of the genomic RNA. This uridylylated form acts as a nucleotide-peptide primer for the polymerase. In terms of processing, potyviral RNA is expressed as two polyproteins which undergo post-translational proteolytic processing. Genome polyprotein is processed by NIa-pro, P1 and HC-pro proteinases resulting in the production of at least ten individual proteins. P3N-PIPO polyprotein is cleaved by P1 and HC-pro proteinases resulting in the production of three individual proteins. The P1 proteinase and the HC-pro cleave only their respective C-termini autocatalytically. 6K1 is essential for proper proteolytic separation of P3 from CI.

It localises to the host cytoplasmic vesicle. The protein resides in the host nucleus. Its subcellular location is the virion. It catalyses the reaction RNA(n) + a ribonucleoside 5'-triphosphate = RNA(n+1) + diphosphate. It carries out the reaction Hydrolyzes glutaminyl bonds, and activity is further restricted by preferences for the amino acids in P6 - P1' that vary with the species of potyvirus, e.g. Glu-Xaa-Xaa-Tyr-Xaa-Gln-|-(Ser or Gly) for the enzyme from tobacco etch virus. The natural substrate is the viral polyprotein, but other proteins and oligopeptides containing the appropriate consensus sequence are also cleaved.. The enzyme catalyses Hydrolyzes a Gly-|-Gly bond at its own C-terminus, commonly in the sequence -Tyr-Xaa-Val-Gly-|-Gly, in the processing of the potyviral polyprotein.. In terms of biological role, required for aphid transmission and also has proteolytic activity. Only cleaves a Gly-Gly dipeptide at its own C-terminus. Interacts with virions and aphid stylets. Acts as a suppressor of RNA-mediated gene silencing, also known as post-transcriptional gene silencing (PTGS), a mechanism of plant viral defense that limits the accumulation of viral RNAs. May have RNA-binding activity. Functionally, has helicase activity. It may be involved in replication. Its function is as follows. Indispensable for virus replication. Reduces the abundance of host transcripts related to jasmonic acid biosynthesis therefore altering the host defenses. In order to increase its own stability, decreases host protein degradation pathways. Indispensable for virus replication. In terms of biological role, mediates the cap-independent, EIF4E-dependent translation of viral genomic RNAs. Binds to the cap-binding site of host EIF4E and thus interferes with the host EIF4E-dependent mRNA export and translation. VPg-RNA directly binds EIF4E and is a template for transcription. Also forms trimeric complexes with EIF4E-EIF4G, which are templates for translation. Functionally, has RNA-binding and proteolytic activities. Its function is as follows. An RNA-dependent RNA polymerase that plays an essential role in the virus replication. Involved in aphid transmission, cell-to-cell and systemis movement, encapsidation of the viral RNA and in the regulation of viral RNA amplification. This is Genome polyprotein from Arachis hypogaea (Peanut).